The primary structure comprises 1486 residues: MIERGKFRSLTLINWNGFFARTFDLDELVTTLSGGNGAGKSTTMAAFVTALIPDLTLLHFRNTTEAGATSGSRDKGLHGKLKAGVCYSMLDTINSRHQRVVVGVRLQQVAGRDRKVDIKPFAIQGLPMSVQPTQLVTETLNERQARVLPLNELKDKLEAMEGVQFKQFNSITDYHSLMFDLGIIARRLRSASDRSKFYRLIEASLYGGISSAITRSLRDYLLPENSGVRKAFQDMEAALRENRMTLEAIRVTQSDRDLFKHLISEATNYVAADYMRHANERRVHLDKALEFRRELHTSRQQLAAEQYKHVDMARELAEHNGAEGDLEADYQAASDHLNLVQTALRQQEKIERYEVDLDELQIRLEEQNEVVAEAIERQEENEARAEAAELEVDELKSQLADYQQALDVQQTRAIQYNQAIAALNRAKELCHLPDLTADSAAEWLETFQAKELEATEKMLSLEQKMSMAQTAHSQFEQAYQLVVAINGPLARNEAWDVARELLREGVDQRHLAEQVQPLRMRLSELEQRLREQQEAERLLADFCKRQGKNFDIDELEALHQELEARIASLSDSVSNAREERMALRQEQEQLQSRIQSLMQRAPVWLAAQNSLNQLSEQCGEEFSSSQDVTEYLQQLLEREREAIVERDEVGARKNAVDEEIERLSQPGGSEDQRLNALAERFGGVLLSEIYDDVSLEDAPYFSALYGPSRHAIVVPDLSQVTEHLEGLTDCPEDLYLIEGDPQSFDDSVFSVDELEKAVVVKIADRQWRYSRFPEVPLFGRAARESRIESLHAEREVLSERFATLSFDVQKTQRLHQAFSRFIGSHLAVAFESDPEAEIRQLNSRRVELERALSNHENDNQQQRIQFEQAKEGVTALNRILPRLNLLADDSLADRVDEIRERLDEAQEAARFVQQFGNQLAKLEPIVSVLQSDPEQFEQLKEDYAYSQQMQRDARQQAFALTEVVQRRAHFSYSDSAEMLSGNSDLNEKLRERLEQAEAERTRAREALRGHAAQLSQYNQVLASLKSSYDTKKELLNDLQRELQDIGVRADSGAEERARIRRDELHAQLSNNRSRRNQLEKALTFCEAEMDNLTRKLRKLERDYFEMREQVVTAKAGWCAVMRMVKDNGVERRLHRRELAYLSADDLRSMSDKALGALRLAVADNEHLRDVLRMSEDPKRPERKIQFFVAVYQHLRERIRQDIIRTDDPVEAIEQMEIELSRLTEELTSREQKLAISSRSVANIIRKTIQREQNRIRMLNQGLQNVSFGQVNSVRLNVNVRETHAMLLDVLSEQHEQHQDLFNSNRLTFSEALAKLYQRLNPQIDMGQRTPQTIGEELLDYRNYLEMEVEVNRGSDGWLRAESGALSTGEAIGTGMSILVMVVQSWEDESRRLRGKDISPCRLLFLDEAARLDARSIATLFELCERLQMQLIIAAPENISPEKGTTYKLVRKVFQNTEHVHVVGLRGFAPQLPETLLGRDEAPSQAS.

34–41 (GGNGAGKS) serves as a coordination point for ATP. Coiled-coil stretches lie at residues 326 to 418 (LEAD…QYNQ), 444 to 480 (LETFQAKELEATEKMLSLEQKMSMAQTAHSQFEQAYQ), and 509 to 603 (RHLA…RAPV). The interval 666-783 (PGGSEDQRLN…EVPLFGRAAR (118 aa)) is flexible hinge. 3 coiled-coil regions span residues 835 to 923 (EAEI…AKLE), 977 to 1115 (EMLS…TAKA), and 1209 to 1266 (VEAI…QNVS).

Belongs to the SMC family. MukB subfamily. Homodimerization via its hinge domain. Binds to DNA via its C-terminal region. Interacts, and probably forms a ternary complex, with MukE and MukF via its C-terminal region. The complex formation is stimulated by calcium or magnesium. Interacts with tubulin-related protein FtsZ.

The protein resides in the cytoplasm. The protein localises to the nucleoid. In terms of biological role, plays a central role in chromosome condensation, segregation and cell cycle progression. Functions as a homodimer, which is essential for chromosome partition. Involved in negative DNA supercoiling in vivo, and by this means organize and compact chromosomes. May achieve or facilitate chromosome segregation by condensation DNA from both sides of a centrally located replisome during cell division. The polypeptide is Chromosome partition protein MukB (Shigella flexneri serotype 5b (strain 8401)).